A 217-amino-acid chain; its full sequence is Adenylate kinase (217 aa).

10-15 (GAGKGT) is a binding site for ATP. An NMP region spans residues 30–59 (STGDMLRAAVKAGSPLGVKVKDIMASGQLV). AMP is bound by residues threonine 31, arginine 36, 57 to 59 (QLV), 85 to 88 (GFPR), and glutamine 92. The segment at 122 to 159 (GRRVHEASGRIYHVTHNPPKTEGVDDITGEPLVQRDDD) is LID. ATP is bound by residues arginine 123 and 132–133 (IY). AMP is bound by residues arginine 156 and arginine 167. An ATP-binding site is contributed by glycine 202.

This sequence belongs to the adenylate kinase family. Monomer.

It localises to the cytoplasm. The enzyme catalyses AMP + ATP = 2 ADP. It participates in purine metabolism; AMP biosynthesis via salvage pathway; AMP from ADP: step 1/1. Functionally, catalyzes the reversible transfer of the terminal phosphate group between ATP and AMP. Plays an important role in cellular energy homeostasis and in adenine nucleotide metabolism. The chain is Adenylate kinase from Teredinibacter turnerae (strain ATCC 39867 / T7901).